The following is a 620-amino-acid chain: 1-deoxy-D-xylulose-5-phosphate synthase (620 aa).

Residues H80 and 121–123 each bind thiamine diphosphate; that span reads GHS. D152 provides a ligand contact to Mg(2+). Thiamine diphosphate contacts are provided by residues 153-154, N181, Y288, and E370; that span reads GA. Residue N181 participates in Mg(2+) binding.

The protein belongs to the transketolase family. DXPS subfamily. In terms of assembly, homodimer. Mg(2+) is required as a cofactor. Requires thiamine diphosphate as cofactor.

It carries out the reaction D-glyceraldehyde 3-phosphate + pyruvate + H(+) = 1-deoxy-D-xylulose 5-phosphate + CO2. It participates in metabolic intermediate biosynthesis; 1-deoxy-D-xylulose 5-phosphate biosynthesis; 1-deoxy-D-xylulose 5-phosphate from D-glyceraldehyde 3-phosphate and pyruvate: step 1/1. Functionally, catalyzes the acyloin condensation reaction between C atoms 2 and 3 of pyruvate and glyceraldehyde 3-phosphate to yield 1-deoxy-D-xylulose-5-phosphate (DXP). This chain is 1-deoxy-D-xylulose-5-phosphate synthase, found in Escherichia fergusonii (strain ATCC 35469 / DSM 13698 / CCUG 18766 / IAM 14443 / JCM 21226 / LMG 7866 / NBRC 102419 / NCTC 12128 / CDC 0568-73).